Consider the following 89-residue polypeptide: Large ribosomal subunit protein uL30 (89 aa).

Belongs to the universal ribosomal protein uL30 family. As to quaternary structure, part of the 50S ribosomal subunit.

The chain is Large ribosomal subunit protein uL30 from Myxococcus xanthus (strain DK1622).